The primary structure comprises 563 residues: Germacrene-A synthase (563 aa).

4 residues coordinate Mg(2+): aspartate 316, aspartate 320, aspartate 461, and glutamate 469. The short motif at 316 to 320 is the DDXXD motif element; that stretch reads DDIYD.

This sequence belongs to the terpene synthase family. Tpsa subfamily. Mg(2+) is required as a cofactor. In terms of tissue distribution, expressed in young leaves. Detected in trichomes and cones.

It carries out the reaction (2E,6E)-farnesyl diphosphate = (+)-(R)-germacrene A + diphosphate. It participates in secondary metabolite biosynthesis; terpenoid biosynthesis. Functionally, sesquiterpene synthase that catalyzes the formation of germacrene A. Can use farnesyl diphosphate as substrate, but not geranyl diphosphate or geranylgeranyl diphosphate. Beta-elemene, the initially measured product in the assay, is derived nonenzymatically from germacrene A. This is Germacrene-A synthase from Humulus lupulus (European hop).